The sequence spans 132 residues: Interleukin-13 (132 aa).

A signal peptide spans 1-18 (MALLLTMVIALTCLGGFA). N-linked (GlcNAc...) asparagine glycosylation is found at N38, N49, N57, and N72. Cystine bridges form between C48/C76 and C64/C90.

It belongs to the IL-4/IL-13 family. As to quaternary structure, interacts with IL13RA2.

The protein resides in the secreted. Cytokine that plays important roles in allergic inflammation and immune response to parasite infection. Synergizes with IL2 in regulating interferon-gamma synthesis. Stimulates B-cell proliferation, and activation of eosinophils, basophils, and mast cells. Plays an important role in controlling IL33 activity by modulating the production of transmembrane and soluble forms of interleukin-1 receptor-like 1/IL1RL1. Displays the capacity to antagonize Th1-driven proinflammatory immune response and downregulates synthesis of many proinflammatory cytokines including IL1, IL6, IL10, IL12 and TNF-alpha through a mechanism that partially involves suppression of NF-kappa-B. Also functions on nonhematopoietic cells, including endothelial cells where it induces vascular cell adhesion protein 1/VCAM1, which is important in the recruitment of eosinophils. Exerts its biological effects through its receptors which comprises the IL4R chain and the IL13RA1 chain, to activate JAK1 and TYK2, leading to the activation of STAT6. Aside from IL13RA1, another receptor IL13RA2 acts as a high affinity decoy for IL13 and mediates internalization and depletion of extracellular IL13. The sequence is that of Interleukin-13 (IL13) from Macaca thibetana (Pere David's macaque).